Here is a 185-residue protein sequence, read N- to C-terminus: Small ribosomal subunit protein uS4 (185 aa).

Positions 108-170 (RRLQTLVYRK…GKSPFVDASH (63 aa)) constitute an S4 RNA-binding domain.

It belongs to the universal ribosomal protein uS4 family. Part of the 30S ribosomal subunit. Contacts protein S5. The interaction surface between S4 and S5 is involved in control of translational fidelity.

Its function is as follows. One of the primary rRNA binding proteins, it binds directly to 16S rRNA where it nucleates assembly of the body of the 30S subunit. With S5 and S12 plays an important role in translational accuracy. This chain is Small ribosomal subunit protein uS4, found in Methanoregula boonei (strain DSM 21154 / JCM 14090 / 6A8).